The chain runs to 311 residues: Protoheme IX farnesyltransferase (311 aa).

The next 8 membrane-spanning stretches (helical) occupy residues L39–E59, L61–F81, A111–P131, A133–K153, I162–L182, I187–I207, F246–W266, and F287–L307.

This sequence belongs to the UbiA prenyltransferase family. Protoheme IX farnesyltransferase subfamily. Interacts with CtaA.

It is found in the cell membrane. It carries out the reaction heme b + (2E,6E)-farnesyl diphosphate + H2O = Fe(II)-heme o + diphosphate. It participates in porphyrin-containing compound metabolism; heme O biosynthesis; heme O from protoheme: step 1/1. Functionally, converts heme B (protoheme IX) to heme O by substitution of the vinyl group on carbon 2 of heme B porphyrin ring with a hydroxyethyl farnesyl side group. This chain is Protoheme IX farnesyltransferase, found in Shouchella clausii (strain KSM-K16) (Alkalihalobacillus clausii).